The sequence spans 434 residues: Histidinol dehydrogenase (434 aa).

Positions 130, 188, and 211 each coordinate NAD(+). Substrate contacts are provided by serine 237, glutamine 259, and histidine 262. 2 residues coordinate Zn(2+): glutamine 259 and histidine 262. Residues glutamate 326 and histidine 327 each act as proton acceptor in the active site. Substrate is bound by residues histidine 327, aspartate 360, glutamate 414, and histidine 419. Aspartate 360 provides a ligand contact to Zn(2+). Position 419 (histidine 419) interacts with Zn(2+).

This sequence belongs to the histidinol dehydrogenase family. Homodimer. Zn(2+) serves as cofactor.

It catalyses the reaction L-histidinol + 2 NAD(+) + H2O = L-histidine + 2 NADH + 3 H(+). Its pathway is amino-acid biosynthesis; L-histidine biosynthesis; L-histidine from 5-phospho-alpha-D-ribose 1-diphosphate: step 9/9. In terms of biological role, catalyzes the sequential NAD-dependent oxidations of L-histidinol to L-histidinaldehyde and then to L-histidine. This is Histidinol dehydrogenase from Escherichia coli O6:H1 (strain CFT073 / ATCC 700928 / UPEC).